The chain runs to 548 residues: Chaperonin GroEL (548 aa).

ATP is bound by residues 30–33 (TLGP), K51, 87–91 (DGTTT), G415, 479–481 (NAA), and D495.

The protein belongs to the chaperonin (HSP60) family. In terms of assembly, forms a cylinder of 14 subunits composed of two heptameric rings stacked back-to-back. Interacts with the co-chaperonin GroES.

The protein localises to the cytoplasm. It catalyses the reaction ATP + H2O + a folded polypeptide = ADP + phosphate + an unfolded polypeptide.. Functionally, together with its co-chaperonin GroES, plays an essential role in assisting protein folding. The GroEL-GroES system forms a nano-cage that allows encapsulation of the non-native substrate proteins and provides a physical environment optimized to promote and accelerate protein folding. The polypeptide is Chaperonin GroEL (Klebsiella pneumoniae (strain 342)).